Reading from the N-terminus, the 62-residue chain is Photosystem II reaction center protein Z (62 aa).

Transmembrane regions (helical) follow at residues 8-28 and 41-61; these read AVFALIITSSILLISVPVVFA and FSGTSLWIGLVFLVGILNSLI.

This sequence belongs to the PsbZ family. In terms of assembly, PSII is composed of 1 copy each of membrane proteins PsbA, PsbB, PsbC, PsbD, PsbE, PsbF, PsbH, PsbI, PsbJ, PsbK, PsbL, PsbM, PsbT, PsbY, PsbZ, Psb30/Ycf12, at least 3 peripheral proteins of the oxygen-evolving complex and a large number of cofactors. It forms dimeric complexes.

Its subcellular location is the plastid. The protein localises to the chloroplast thylakoid membrane. In terms of biological role, may control the interaction of photosystem II (PSII) cores with the light-harvesting antenna, regulates electron flow through the 2 photosystem reaction centers. PSII is a light-driven water plastoquinone oxidoreductase, using light energy to abstract electrons from H(2)O, generating a proton gradient subsequently used for ATP formation. This Arabidopsis thaliana (Mouse-ear cress) protein is Photosystem II reaction center protein Z.